The chain runs to 269 residues: ATP synthase subunit gamma, mitochondrial (269 aa).

As to quaternary structure, F-type ATP synthases have 2 components, the catalytic core F(1) and the membrane-embedded component F(0), linked together by a central stalk and a peripheral stalk. The central stalk, also called rotor shaft, is often seen as part of F(1). The peripheral stalk is seen as part of F(0). F(0) contains the membrane channel next to the rotor. F-type ATP synthases form dimers but each monomer functions independently in ATP generation. The dimer consists of 18 different polypeptides: ATP1 (subunit alpha, part of F(1), 3 molecules per monomer), ATP2 (subunit beta, part of F(1), 3 molecules per monomer), ATP3 (subunit gamma, part of the central stalk), ATP4 (subunit b, part of the peripheral stalk), ATP5/OSCP (subunit 5/OSCP, part of the peripheral stalk), ATP6 (subunit a, part of the peripheral stalk), ATP7 (subunit d, part of the peripheral stalk), ATP8 (subunit 8, part of the peripheral stalk), OLI1 (subunit c, part of the rotor, 10 molecules per monomer), ATP14 (subunit h, part of the peripheral stalk), ATP15 (subunit epsilon, part of the central stalk), ATP16 (subunit delta, part of the central stalk), ATP17 (subunit f, part of the peripheral stalk), ATP18 (subunit i/j, part of the peripheral stalk). Dimer-specific subunits are ATP19 (subunit k, at interface between monomers), ATP20 (subunit g, at interface between monomers), TIM11 (subunit e, at interface between monomers). Also contains subunit L.

The protein localises to the mitochondrion inner membrane. Its function is as follows. Mitochondrial membrane ATP synthase (F(1)F(0) ATP synthase or Complex V) produces ATP from ADP in the presence of a proton gradient across the membrane which is generated by electron transport complexes of the respiratory chain. F-type ATP synthases consist of two structural domains, F(1) - containing the extramembraneous catalytic core, and F(0) - containing the membrane proton channel, linked together by a central stalk and a peripheral stalk. During catalysis, ATP synthesis in the catalytic domain of F(1) is coupled via a rotary mechanism of the central stalk subunits to proton translocation. Part of the complex F(1) domain and the central stalk which is part of the complex rotary element. The gamma/ATP3 subunit protrudes into the catalytic domain formed of alpha/ATP1(3)beta/ATP2(3). Rotation of the central stalk against the surrounding alpha/ATP1(3)beta/ATP2(3) subunits leads to hydrolysis of ATP in three separate catalytic sites on the beta/ATP2 subunits. The chain is ATP synthase subunit gamma, mitochondrial from Pichia angusta (Yeast).